A 347-amino-acid polypeptide reads, in one-letter code: Microtubule-associated protein Jupiter (347 aa).

The segment covering 1–14 has biased composition (polar residues); the sequence is MISNFDCTDNQASS. The tract at residues 1–33 is disordered; sequence MISNFDCTDNQASSKVLRPPGGGSSDIFGSEMP. The residue at position 24 (serine 24) is a Phosphoserine. Phosphothreonine occurs at positions 35 and 96. Phosphoserine is present on residues serine 105, serine 134, and serine 145. Disordered stretches follow at residues 127 to 193 and 303 to 347; these read HYNG…PTPP and GNPV…SGLW. Residues 132–145 show a composition bias toward low complexity; it reads SGSVSSASSSVSSS. Polar residues predominate over residues 146 to 164; sequence TENLKMNSGSRSVFRNMST. A compositionally biased stretch (pro residues) spans 181–193; it reads PPSPVPIEVPTPP.

This sequence belongs to the MAP Jupiter family.

The protein resides in the nucleus. It localises to the cytoplasm. Its subcellular location is the cytoskeleton. It is found in the spindle. Functionally, binds to all microtubule populations. In Drosophila yakuba (Fruit fly), this protein is Microtubule-associated protein Jupiter.